The primary structure comprises 814 residues: Phenylalanine--tRNA ligase beta subunit (814 aa).

The 115-residue stretch at 39–153 (SARAKGVVVG…ELPALGAPVA (115 aa)) folds into the tRNA-binding domain. One can recognise a B5 domain in the interval 414 to 498 (ADASSVLLRR…RLVGFDRFGA (85 aa)). Positions 476, 482, 485, and 486 each coordinate Mg(2+). An FDX-ACB domain is found at 720–813 (PTVPASERDL…LVKQHGAELR (94 aa)).

Belongs to the phenylalanyl-tRNA synthetase beta subunit family. Type 1 subfamily. As to quaternary structure, tetramer of two alpha and two beta subunits. Mg(2+) is required as a cofactor.

It is found in the cytoplasm. It carries out the reaction tRNA(Phe) + L-phenylalanine + ATP = L-phenylalanyl-tRNA(Phe) + AMP + diphosphate + H(+). The protein is Phenylalanine--tRNA ligase beta subunit of Parasynechococcus marenigrum (strain WH8102).